Consider the following 487-residue polypeptide: uncharacterized protein (487 aa).

ABC transporter domains are found at residues 5–249 (VKFA…IPVK) and 265–487 (ISME…VIHA). 297–304 (GSNGSGKT) contacts ATP.

This sequence belongs to the ABC transporter superfamily.

Its subcellular location is the mitochondrion. This is an uncharacterized protein from Schizosaccharomyces pombe (strain 972 / ATCC 24843) (Fission yeast).